A 350-amino-acid polypeptide reads, in one-letter code: MRIPNVFLSYLRQVAVDGTLSSCSGVKSRKPVIAYGFDDSQDSLVDENDEKILEPFGYYRHLLKGKSARTVLMHCFNAFLGLPEDWVIGVTKAIEDLHNASLLIDDIEDESALRRGSPAAHMKYGIALTMNAGNLVYFTVLQDVYDLGMKTGGTQVANAMARIYTEEMIELHRGQGIEIWWRDQRSPPSVDQYIHMLEQKTGGLLRLGVRLLQCHPGVNNRADLSDIALRIGVYYQLRDDYINLMSTSYHDERGFAEDMTEGKYTFPMLHSLKRSPDSGLREILDLKPADIALKKKAIAIMQDTGSLVATRNLLGAVKNDLSGLVAEQRGDDYAMSAGLERFLEKLYIAE.

Isopentenyl diphosphate-binding residues include lysine 66, arginine 69, and histidine 98. The Mg(2+) site is built by aspartate 105 and aspartate 109. Position 114 (arginine 114) interacts with dimethylallyl diphosphate. Arginine 115 contacts isopentenyl diphosphate. 5 residues coordinate dimethylallyl diphosphate: lysine 200, threonine 201, glutamine 236, asparagine 243, and lysine 263.

The protein belongs to the FPP/GGPP synthase family. The cofactor is Mg(2+).

It carries out the reaction isopentenyl diphosphate + dimethylallyl diphosphate = (2E)-geranyl diphosphate + diphosphate. The catalysed reaction is isopentenyl diphosphate + (2E)-geranyl diphosphate = (2E,6E)-farnesyl diphosphate + diphosphate. The enzyme catalyses isopentenyl diphosphate + (2E,6E)-farnesyl diphosphate = (2E,6E,10E)-geranylgeranyl diphosphate + diphosphate. Its pathway is secondary metabolite biosynthesis; terpenoid biosynthesis. In terms of biological role, geranylgeranyl pyrophosphate synthase; part of the gene cluster that mediates the biosynthesis of pleuromutilin, a tricyclic diterpene showing antibacterial properties. The geranylgeranyl diphosphate (GGPP) synthase catalyzes the first step in pleuromutilin biosynthesis. GGPP is then substrate of the premutilin synthase (PS) to yield premutilin. Premutilin synthase is a bifunctional enzyme composed of the fusion of a class II diterpene cyclase (DTC) and a class I diterpene synthase (DTS), with the corresponding domains and active sites containing characteristic aspartate-rich motifs. GGPP is first converted to mutildienyl-diphosphate (MPP) at the class II DTC site. MPP is subsequently further cyclized at the class I DTS site, followed by a 1,5-hydride shift and addition of water prior to terminating deprotonation, to yield premutilin. In addition to the aforementioned GGPP synthase and bifunctional diterpene synthase, the cluster also contains three cytochrome P450 monooxygenases, a short-chain alcohol dehydrogenase, and an acyltransferase, involved in the conversion of premutilin to pleuromutilin. The cytochrome P450 monooxygenases P450-1 and P450-2 hydroxylate premutilin at C-11 and C-3, respectively, producing 11-hydroxypremutilin and 3-hydroxypremutilin. The combination of the actions of both ple5 and ple6 leads to the production of 3,11-dihydroxypremutilin. The short chain dehydrogenase SDR further converts 3,11-dihydroxypremutilin into mutilin. The acetyltransferase ATF then acetylates mutilin to produce 14-O-acetylmutilin. Finally, the cytochrome P450 monooxygenase P450-3 catalyzes hydroxylation on the alpha position of the acetyl side chain of 14-O-acetylmutilin to yield pleuromutilin. In Clitopilus passeckerianus (Pleurotus passeckerianus), this protein is Geranylgeranyl pyrophosphate synthase.